The sequence spans 956 residues: Ubiquitin carboxyl-terminal hydrolase CYLD (956 aa).

The interval 106-593 (CEERFSLFKN…LEIMIGKKKG (488 aa)) is interaction with TRIP. CAP-Gly domains follow at residues 153–198 (LAER…VFVA) and 253–286 (DVLPGKESLGYFVGVDMDNPIGNWDGRFDGVQLC). The tract at residues 309 to 353 (SVTQERRPPKLAFMSRGVGDKGSSSHNKPKATGSTSDPGNRNRSE) is disordered. Polar residues predominate over residues 330 to 349 (GSSSHNKPKATGSTSDPGNR). Ser387 is subject to Phosphoserine. A disordered region spans residues 392-411 (STDFDRSSPPLQPPPVNSLS). Residues 394–469 (DFDRSSPPLQ…LAMPPGNSHG (76 aa)) are interaction with TRAF2. A phosphoserine mark is found at Ser418 and Ser422. Residues 470-684 (LEVGSLAEVK…FTSEEKDPEE (215 aa)) form an interaction with IKBKG/NEMO region. Residues 492 to 535 (GQPPGLNEVLAGLELEDECAGCTDGTFRGTRYFTCALKKALFVK) enclose the CAP-Gly 3 domain. The USP domain maps to 592–950 (KGIQGHYNSC…DAYMCMYQSP (359 aa)). The Nucleophile role is filled by Cys601. Residues 781–833 (LEDTPRQCRICGGLAMYECRECYDDPDISAGKIKQFCKTCNTQVHLHPKRLNH) are B-box. The Zn(2+) site is built by Cys788, Cys791, Cys799, Cys802, Cys817, Cys820, His825, and His833. The Proton acceptor role is filled by His871.

This sequence belongs to the peptidase C19 family. In terms of assembly, interacts (via CAP-Gly domain) with IKBKG/NEMO (via proline-rich C-terminal region). Interacts with TRAF2 and TRIP. Interacts with PLK1, DVL1, DVL3, MAVS, TBK1, IKKE and RIGI. Interacts (via CAP-Gly domain) with microtubules. Interacts with HDAC6 and BCL3. Interacts with MAP3K7. Identified in a complex with TRAF6 and SQSTM1. Interacts with OPTN and SQSTM1. Interacts with CEP350. Interacts with RNF31; the interaction is indirect and is mediated via SPATA2. Interacts with SPATA2 (via the PUB domain); the interaction is direct and recruits CYLD to the LUBAC complex, thereby regulating TNF-alpha-induced necroptosis. In terms of processing, phosphorylated on several serine residues by IKKA and/or IKKB in response to immune stimuli. Phosphorylation requires IKBKG. Phosphorylation abolishes TRAF2 deubiquitination, interferes with the activation of Jun kinases, and strongly reduces CD40-dependent gene activation by NF-kappa-B. Post-translationally, ubiquitinated. Polyubiquitinated in hepatocytes treated with palmitic acid. Ubiquitination is mediated by E3 ligase TRIM47 and leads to proteasomal degradation.

It is found in the cytoplasm. The protein localises to the perinuclear region. It localises to the cytoskeleton. The protein resides in the cell membrane. Its subcellular location is the microtubule organizing center. It is found in the centrosome. The protein localises to the spindle. It localises to the cilium basal body. It carries out the reaction Thiol-dependent hydrolysis of ester, thioester, amide, peptide and isopeptide bonds formed by the C-terminal Gly of ubiquitin (a 76-residue protein attached to proteins as an intracellular targeting signal).. In terms of biological role, deubiquitinase that specifically cleaves 'Lys-63'- and linear 'Met-1'-linked polyubiquitin chains and is involved in NF-kappa-B activation and TNF-alpha-induced necroptosis. Negatively regulates NF-kappa-B activation by deubiquitinating upstream signaling factors. Contributes to the regulation of cell survival, proliferation and differentiation via its effects on NF-kappa-B activation. Negative regulator of Wnt signaling. Inhibits HDAC6 and thereby promotes acetylation of alpha-tubulin and stabilization of microtubules. Plays a role in the regulation of microtubule dynamics, and thereby contributes to the regulation of cell proliferation, cell polarization, cell migration, and angiogenesis. Required for normal cell cycle progress and normal cytokinesis. Inhibits nuclear translocation of NF-kappa-B. Plays a role in the regulation of inflammation and the innate immune response, via its effects on NF-kappa-B activation. Dispensable for the maturation of intrathymic natural killer cells, but required for the continued survival of immature natural killer cells. Negatively regulates TNFRSF11A signaling and osteoclastogenesis. Involved in the regulation of ciliogenesis, allowing ciliary basal bodies to migrate and dock to the plasma membrane; this process does not depend on NF-kappa-B activation. Ability to remove linear ('Met-1'-linked) polyubiquitin chains regulates innate immunity and TNF-alpha-induced necroptosis: recruited to the LUBAC complex via interaction with SPATA2 and restricts linear polyubiquitin formation on target proteins. Regulates innate immunity by restricting linear polyubiquitin formation on RIPK2 in response to NOD2 stimulation. Involved in TNF-alpha-induced necroptosis by removing linear ('Met-1'-linked) polyubiquitin chains from RIPK1, thereby regulating the kinase activity of RIPK1. Negatively regulates intestinal inflammation by removing 'Lys-63' linked polyubiquitin chain of NLRP6, thereby reducing the interaction between NLRP6 and PYCARD/ASC and formation of the NLRP6 inflammasome. Does not catalyze deubiquitination of heterotypic 'Lys-63'-/'Lys-48'-linked branched ubiquitin chains. Removes 'Lys-63' linked polyubiquitin chain of MAP3K7, which inhibits phosphorylation and blocks downstream activation of the JNK-p38 kinase cascades. Also removes 'Lys-63'-linked polyubiquitin chains of MAP3K1 and MA3P3K3, which inhibit their interaction with MAP2K1 and MAP2K2. The sequence is that of Ubiquitin carboxyl-terminal hydrolase CYLD (CYLD) from Pongo abelii (Sumatran orangutan).